The following is a 1243-amino-acid chain: Interphotoreceptor matrix proteoglycan 2 (1243 aa).

A signal peptide spans 1–27 (MIMFLPVGRMSLGILILFLTGGNLVSA). Over 28–1106 (SEERQEPMHA…EFVSEPFVIG (1079 aa)) the chain is Extracellular. Residues 205–234 (GLASESSAASPQESISNEIENVTEEPTQPA) form a disordered region. Residues 207-220 (ASESSAASPQESIS) are compositionally biased toward low complexity. Residues 221–230 (NEIENVTEEP) show a composition bias toward polar residues. Residue Asn-225 is glycosylated (N-linked (GlcNAc...) asparagine). The SEA 1 domain occupies 235–349 (AEQIAEFSIQ…KPTAVYTISN (115 aa)). The interval 255–263 (RDPSSALYR) is hyaluronan-binding motif involved in chondroitin sulfate A-binding. N-linked (GlcNAc...) asparagine glycans are attached at residues Asn-297, Asn-316, and Asn-366. 3 O-linked (GalNAc...) threonine glycosylation sites follow: Thr-427, Thr-428, and Thr-429. Residue Asn-582 is glycosylated (N-linked (GlcNAc...) asparagine). O-linked (GalNAc...) threonine glycosylation is found at Thr-701, Thr-704, and Thr-712. Over residues 748–762 (EDMVHTESSSHKELD) the composition is skewed to basic and acidic residues. The interval 748 to 768 (EDMVHTESSSHKELDSEVPVS) is disordered. Thr-817 and Thr-888 each carry an O-linked (GalNAc...) threonine glycan. Residues 900–1013 (GALVVFFSLR…YSLDVESGDE (114 aa)) enclose the SEA 2 domain. N-linked (GlcNAc...) asparagine glycosylation is found at Asn-945 and Asn-959. EGF-like domains lie at 1013 to 1054 (EANP…LPCQ) and 1055 to 1096 (SLCD…QHCE). 6 cysteine pairs are disulfide-bonded: Cys-1017-Cys-1028, Cys-1022-Cys-1039, Cys-1041-Cys-1053, Cys-1057-Cys-1070, Cys-1064-Cys-1080, and Cys-1082-Cys-1095. Residues 1083-1091 (RVGSNWWYR) form a hyaluronan-binding motif involved in chondroitin sulfate C-binding region. The helical transmembrane segment at 1107–1127 (ITIASVVSFLLVASAVVFFLV) threads the bilayer. A hyaluronan-binding motif involved in chondroitin sulfate A- and C-binding region spans residues 1128 to 1136 (KMLQAQNVR). Residues 1128–1243 (KMLQAQNVRR…FVREHQMEEL (116 aa)) lie on the Cytoplasmic side of the membrane. The hyaluronan-binding motif involved in chondroitin sulfate C-binding stretch occupies residues 1139 to 1147 (RQRPTSSSR). The tract at residues 1212 to 1220 (KEEIQERMR) is hyaluronan-binding motif involved in chondroitin sulfate A- and C-binding motif.

Expressed in the retina (at protein level). Expressed in the pineal gland.

The protein resides in the photoreceptor outer segment membrane. The protein localises to the photoreceptor inner segment membrane. It is found in the secreted. Its subcellular location is the extracellular space. It localises to the extracellular matrix. The protein resides in the interphotoreceptor matrix. Functionally, chondroitin sulfate- and hyaluronan-binding proteoglycan involved in the organization of interphotoreceptor matrix; may participate in the maturation and maintenance of the light-sensitive photoreceptor outer segment. Binds heparin. The sequence is that of Interphotoreceptor matrix proteoglycan 2 (Impg2) from Mus musculus (Mouse).